Consider the following 33-residue polypeptide: Photosystem II reaction center protein Psb30 (33 aa).

A helical transmembrane segment spans residues 5 to 25; it reads ILSQLIAIAVTLFLGPVVVIL.

The protein belongs to the Psb30/Ycf12 family. As to quaternary structure, PSII is composed of 1 copy each of membrane proteins PsbA, PsbB, PsbC, PsbD, PsbE, PsbF, PsbH, PsbI, PsbJ, PsbK, PsbL, PsbM, PsbT, PsbX, PsbY, PsbZ, Psb30/Ycf12, peripheral proteins of the oxygen-evolving complex and a large number of cofactors. It forms dimeric complexes.

Its subcellular location is the plastid. It localises to the chloroplast thylakoid membrane. A core subunit of photosystem II (PSII), probably helps stabilize the reaction center. In Oedogonium cardiacum (Filamentous green alga), this protein is Photosystem II reaction center protein Psb30.